The primary structure comprises 246 residues: Ribonuclease PH (246 aa).

Residues Arg-86 and 124-126 contribute to the phosphate site; that span reads GTR.

Belongs to the RNase PH family. In terms of assembly, homohexameric ring arranged as a trimer of dimers.

The enzyme catalyses tRNA(n+1) + phosphate = tRNA(n) + a ribonucleoside 5'-diphosphate. Functionally, phosphorolytic 3'-5' exoribonuclease that plays an important role in tRNA 3'-end maturation. Removes nucleotide residues following the 3'-CCA terminus of tRNAs; can also add nucleotides to the ends of RNA molecules by using nucleoside diphosphates as substrates, but this may not be physiologically important. Probably plays a role in initiation of 16S rRNA degradation (leading to ribosome degradation) during starvation. This chain is Ribonuclease PH, found in Bacillus licheniformis (strain ATCC 14580 / DSM 13 / JCM 2505 / CCUG 7422 / NBRC 12200 / NCIMB 9375 / NCTC 10341 / NRRL NRS-1264 / Gibson 46).